A 122-amino-acid polypeptide reads, in one-letter code: Large ribosomal subunit protein uL14c (122 aa).

Belongs to the universal ribosomal protein uL14 family. As to quaternary structure, part of the 50S ribosomal subunit.

Its subcellular location is the plastid. The protein localises to the chloroplast. In terms of biological role, binds to 23S rRNA. The protein is Large ribosomal subunit protein uL14c of Vitis vinifera (Grape).